Reading from the N-terminus, the 161-residue chain is 6,7-dimethyl-8-ribityllumazine synthase (161 aa).

Residues Trp31, 63-65 (SFE), and 85-87 (VVI) each bind 5-amino-6-(D-ribitylamino)uracil. 90-91 (GT) contacts (2S)-2-hydroxy-3-oxobutyl phosphate. His93 (proton donor) is an active-site residue. 5-amino-6-(D-ribitylamino)uracil is bound at residue Phe118. A (2S)-2-hydroxy-3-oxobutyl phosphate-binding site is contributed by Arg132.

It belongs to the DMRL synthase family.

It catalyses the reaction (2S)-2-hydroxy-3-oxobutyl phosphate + 5-amino-6-(D-ribitylamino)uracil = 6,7-dimethyl-8-(1-D-ribityl)lumazine + phosphate + 2 H2O + H(+). It participates in cofactor biosynthesis; riboflavin biosynthesis; riboflavin from 2-hydroxy-3-oxobutyl phosphate and 5-amino-6-(D-ribitylamino)uracil: step 1/2. Its function is as follows. Catalyzes the formation of 6,7-dimethyl-8-ribityllumazine by condensation of 5-amino-6-(D-ribitylamino)uracil with 3,4-dihydroxy-2-butanone 4-phosphate. This is the penultimate step in the biosynthesis of riboflavin. This is 6,7-dimethyl-8-ribityllumazine synthase from Pseudarthrobacter chlorophenolicus (strain ATCC 700700 / DSM 12829 / CIP 107037 / JCM 12360 / KCTC 9906 / NCIMB 13794 / A6) (Arthrobacter chlorophenolicus).